A 92-amino-acid chain; its full sequence is MATEQTILVGKKPTTNYVIATVMAFNAGIKRVVLKARGAAISKAVSTAVMVRDRFLPGKVQIRDVKLLSDKVQGQGGRERTVAAVEIVLEMA.

Residue lysine 11 is modified to N6-acetyllysine.

This sequence belongs to the histone-like Alba family. Acetylated. Acetylation at Lys-11 decreases DNA-binding affinity.

Its subcellular location is the cytoplasm. The protein localises to the chromosome. Functionally, binds double-stranded DNA tightly but without sequence specificity. Involved in DNA compaction. This is DNA/RNA-binding protein Alba from Pyrobaculum calidifontis (strain DSM 21063 / JCM 11548 / VA1).